A 617-amino-acid polypeptide reads, in one-letter code: V-type proton ATPase catalytic subunit A (617 aa).

Position 2 is an N-acetylalanine (Asp2). The residue at position 136 (Thr136) is a Phosphothreonine. ATP is bound at residue 250–257; that stretch reads GAFGCGKT. Residue Ser384 is modified to Phosphoserine; by AMPK.

It belongs to the ATPase alpha/beta chains family. As to quaternary structure, V-ATPase is a heteromultimeric enzyme made up of two complexes: the ATP-hydrolytic V1 complex and the proton translocation V0 complex. The V1 complex consists of three catalytic AB heterodimers that form a heterohexamer, three peripheral stalks each consisting of EG heterodimers, one central rotor including subunits D and F, and the regulatory subunits C and H. The proton translocation complex V0 consists of the proton transport subunit a, a ring of proteolipid subunits c9c'', rotary subunit d, subunits e and f, and the accessory subunits ATP6AP1/Ac45 and ATP6AP2/PRR. Interacts with the V0 complex V-ATPase subunit a4 ATP6V0A4. Interacts with WFS1. Interacts with alpha-crystallin B chain/CRYAB and with MTOR, forming a ternary complex. In terms of assembly, (Microbial infection) Interacts with Rabies virus protein M; this interaction promotes virion uncoating. Post-translationally, phosphorylation at Ser-384 by AMPK down-regulates its enzyme activity. As to expression, high expression in the skin.

The protein resides in the cytoplasm. Its subcellular location is the cytosol. It localises to the cytoplasmic vesicle. The protein localises to the secretory vesicle. It is found in the clathrin-coated vesicle membrane. The protein resides in the lysosome. It catalyses the reaction ATP + H2O + 4 H(+)(in) = ADP + phosphate + 5 H(+)(out). Its activity is regulated as follows. ATP hydrolysis occurs at the interface between the nucleotide-binding domains of subunits A and B. ATP hydrolysis triggers a conformational change in the subunits D and F, which induces a shift of subunit d. The c-ring is subsequently rotated and results in a continuous proton translocation across the membrane. In terms of biological role, catalytic subunit of the V1 complex of vacuolar(H+)-ATPase (V-ATPase), a multisubunit enzyme composed of a peripheral complex (V1) that hydrolyzes ATP and a membrane integral complex (V0) that translocates protons. V-ATPase is responsible for acidifying and maintaining the pH of intracellular compartments and in some cell types, is targeted to the plasma membrane, where it is responsible for acidifying the extracellular environment. In aerobic conditions, involved in intracellular iron homeostasis, thus triggering the activity of Fe(2+) prolyl hydroxylase (PHD) enzymes, and leading to HIF1A hydroxylation and subsequent proteasomal degradation. May play a role in neurite development and synaptic connectivity. Its function is as follows. (Microbial infection) Plays an important role in virion uncoating during Rabies virus replication after membrane fusion. Specifically, participates in the dissociation of incoming viral matrix M proteins uncoating through direct interaction. The chain is V-type proton ATPase catalytic subunit A (ATP6V1A) from Homo sapiens (Human).